The chain runs to 136 residues: uncharacterized protein (136 aa).

This is an uncharacterized protein from Saccharomyces cerevisiae (strain ATCC 204508 / S288c) (Baker's yeast).